Here is a 200-residue protein sequence, read N- to C-terminus: Adenylate kinase (200 aa).

Residue 10–15 (GAGKGT) participates in ATP binding. Positions 30 to 59 (STGDMLRAAVAAETPVGLEAKAIMESGGLV) are NMP. AMP is bound by residues Thr31, Arg36, 57–59 (GLV), 85–88 (GFPR), and Gln92. An LID region spans residues 126 to 142 (KRAEETAARGQPVRKDD). Arg127 is a binding site for ATP. AMP is bound by residues Arg139 and Arg150. Lys178 contributes to the ATP binding site.

The protein belongs to the adenylate kinase family. Monomer.

The protein resides in the cytoplasm. The catalysed reaction is AMP + ATP = 2 ADP. It functions in the pathway purine metabolism; AMP biosynthesis via salvage pathway; AMP from ADP: step 1/1. In terms of biological role, catalyzes the reversible transfer of the terminal phosphate group between ATP and AMP. Plays an important role in cellular energy homeostasis and in adenine nucleotide metabolism. The sequence is that of Adenylate kinase from Methylorubrum extorquens (strain PA1) (Methylobacterium extorquens).